Here is a 489-residue protein sequence, read N- to C-terminus: NADH-quinone oxidoreductase subunit N (489 aa).

14 consecutive transmembrane segments (helical) span residues 6-26, 37-57, 66-86, 105-125, 127-147, 159-179, 204-224, 239-259, 271-291, 299-319, 329-349, 377-397, 408-430, and 452-472; these read VLFI…AVML, VFYI…PASS, LLIV…GSLA, FYLL…AHHL, AIFI…GYAF, YMVL…LIYA, ITLL…KLSL, PAPV…AVLL, FFYS…NLLA, RLLG…LIAC, VALY…VVSL, SAMT…GFIG, FHLW…YYLR, and ALTT…LLGI.

This sequence belongs to the complex I subunit 2 family. As to quaternary structure, NDH-1 is composed of 14 different subunits. Subunits NuoA, H, J, K, L, M, N constitute the membrane sector of the complex.

The protein localises to the cell inner membrane. It carries out the reaction a quinone + NADH + 5 H(+)(in) = a quinol + NAD(+) + 4 H(+)(out). Functionally, NDH-1 shuttles electrons from NADH, via FMN and iron-sulfur (Fe-S) centers, to quinones in the respiratory chain. The immediate electron acceptor for the enzyme in this species is believed to be ubiquinone. Couples the redox reaction to proton translocation (for every two electrons transferred, four hydrogen ions are translocated across the cytoplasmic membrane), and thus conserves the redox energy in a proton gradient. In Tolumonas auensis (strain DSM 9187 / NBRC 110442 / TA 4), this protein is NADH-quinone oxidoreductase subunit N.